A 53-amino-acid polypeptide reads, in one-letter code: ATP synthase protein 8 (53 aa).

A helical transmembrane segment spans residues P6–M26.

It belongs to the ATPase protein 8 family. In terms of assembly, F-type ATPases have 2 components, CF(1) - the catalytic core - and CF(0) - the membrane proton channel.

The protein resides in the mitochondrion membrane. Its function is as follows. Mitochondrial membrane ATP synthase (F(1)F(0) ATP synthase or Complex V) produces ATP from ADP in the presence of a proton gradient across the membrane which is generated by electron transport complexes of the respiratory chain. F-type ATPases consist of two structural domains, F(1) - containing the extramembraneous catalytic core and F(0) - containing the membrane proton channel, linked together by a central stalk and a peripheral stalk. During catalysis, ATP synthesis in the catalytic domain of F(1) is coupled via a rotary mechanism of the central stalk subunits to proton translocation. Part of the complex F(0) domain. Minor subunit located with subunit a in the membrane. This is ATP synthase protein 8 (mt:ATPase8) from Ceratitis capitata (Mediterranean fruit fly).